We begin with the raw amino-acid sequence, 216 residues long: Ras-related protein Rab-5C (216 aa).

Serine 30, alanine 31, glycine 33, lysine 34, serine 35, serine 36, histidine 47, glutamate 48, threonine 53, glycine 79, asparagine 134, lysine 135, aspartate 137, alanine 165, and lysine 166 together coordinate GTP. Residue serine 35 participates in Mg(2+) binding. 2 consecutive short sequence motifs (switch) follow at residues glutamine 45–alanine 57 and alanine 78–alanine 94. Threonine 53 provides a ligand contact to Mg(2+). Residues lysine 184–asparagine 216 are disordered. Positions glutamine 203–asparagine 216 are enriched in polar residues. 2 S-geranylgeranyl cysteine lipidation sites follow: cysteine 213 and cysteine 214.

Belongs to the small GTPase superfamily. Rab family. Mg(2+) serves as cofactor. In terms of tissue distribution, detected in brain, ovary, rectum, small intestine, large intestine, liver, spleen, follicle and kidney (at protein level).

Its subcellular location is the cell membrane. It is found in the early endosome membrane. It carries out the reaction GTP + H2O = GDP + phosphate + H(+). With respect to regulation, regulated by guanine nucleotide exchange factors (GEFs) which promote the exchange of bound GDP for free GTP. Regulated by GTPase activating proteins (GAPs) which increase the GTP hydrolysis activity. Inhibited by GDP dissociation inhibitors (GDIs). In terms of biological role, the small GTPases Rab are key regulators of intracellular membrane trafficking, from the formation of transport vesicles to their fusion with membranes. Rabs cycle between an inactive GDP-bound form and an active GTP-bound form that is able to recruit to membranes different sets of downstream effectors directly responsible for vesicle formation, movement, tethering and fusion. The sequence is that of Ras-related protein Rab-5C (RAB5C) from Gallus gallus (Chicken).